The sequence spans 188 residues: uncharacterized protein (188 aa).

The residue at position 14 (serine 14) is a Phosphoserine. A disordered region spans residues arginine 165–histidine 188. Over residues lysine 171 to histidine 188 the composition is skewed to basic residues.

It is found in the nucleus. It localises to the nucleolus. This is an uncharacterized protein from Schizosaccharomyces pombe (strain 972 / ATCC 24843) (Fission yeast).